A 297-amino-acid polypeptide reads, in one-letter code: 6-dehydroglucose reductase (297 aa).

NADP(+)-binding residues include Trp20, Arg21, and Asp49. Catalysis depends on Tyr54, which acts as the Proton donor. Tyr54, Lys98, His129, and Arg130 together coordinate D-glucose. Positions 159, 160, 181, 211, 213, 215, 261, 262, 263, and 267 each coordinate NADP(+).

It belongs to the aldo/keto reductase family. Homotrimer.

The enzyme catalyses D-glucose + NADP(+) = 6-dehydro-D-glucose + NADPH + H(+). Functionally, part of the sulfoquinovose monooxygenase (sulfo-SMO) pathway, a D-sulfoquinovose degradation pathway that enables the complete utilization of all carbons within sulfoquinovose (SQ) with concomitant production of inorganic sulfite. Catalyzes the NADP-dependent reduction of 6-dehydro-D-glucose to D-glucose. Cannot use NADH. This is 6-dehydroglucose reductase from Agrobacterium fabrum (strain C58 / ATCC 33970) (Agrobacterium tumefaciens (strain C58)).